The following is a 1132-amino-acid chain: MEPNDSTSTAVEEPDSLEVLVKTLDSQTRTFIVGAQMNVKEFKEHIAASVSIPSEKQRLIYQGRVLQDDKKLQEYNVGGKVIHLVERAPPQTHLPSGASSGTGSASATHGGGSPPGTRGPGASVHDRNANSYVMVGTFNLPSDGSAVDVHINMEQAPIQSEPRVRLVMAQHMIRDIQTLLSRMETLPYLQCRGGPQPQHSQPPPQPPAVTPEPVALSSQTSEPVESEAPPREPMEAEEVEERAPAQNPELTPGPAPAGPTPAPETNAPNHPSPAEYVEVLQELQRLESRLQPFLQRYYEVLGAAATTDYNNNHEGREEDQRLINLVGESLRLLGNTFVALSDLRCNLACTPPRHLHVVRPMSHYTTPMVLQQAAIPIQINVGTTVTMTGNGTRPPPTPNAEAPPPGPGQASSVAPSSTNVESSAEGAPPPGPAPPPATSHPRVIRISHQSVEPVVMMHMNIQDSGTQPGGVPSAPTGPLGPPGHGQTLGQQVPGFPTAPTRVVIARPTPPQARPSHPGGPPVSGTLQGAGLGTNASLAQMVSGLVGQLLMQPVLVAQGTPGMAPPPAPATASASAGTTNTATTAGPAPGGPAQPPPTPQPSMADLQFSQLLGNLLGPAGPGAGGSGVASPTITVAMPGVPAFLQGMTDFLQATQTAPPPPPPPPPPPPAPEQQTMPPPGSPSGGAGSPGGLGLESLSPEFFTSVVQGVLSSLLGSLGARAGSSESIAAFIQRLSGSSNIFEPGADGALGFFGALLSLLCQNFSMVDVVMLLHGHFQPLQRLQPQLRSFFHQHYLGGQEPTPSNIRMATHTLITGLEEYVRESFSLVQVQPGVDIIRTNLEFLQEQFNSIAAHVLHCTDSGFGARLLELCNQGLFECLALNLHCLGGQQMELAAVINGRIRRMSRGVNPSLVSWLTTMMGLRLQVVLEHMPVGPDAILRYVRRVGDPPQPLPEEPMEVQGAERASPEPQRENASPAPGTTAEEAMSRGPPPAPEGGSRDEQDGASAETEPWAAAVPPEWVPIIQQDIQSQRKVKPQPPLSDAYLSGMPAKRRKTMQGEGPQLLLSEAVSRAAKAAGARPLTSPESLSRDLEAPEVQESYRQQLRSDIQKRLQEDPNYSPQRFPNAQRAFADDP.

Met1 carries the post-translational modification N-acetylmethionine. Positions 17–92 constitute a Ubiquitin-like domain; the sequence is LEVLVKTLDS…HLVERAPPQT (76 aa). 2 disordered regions span residues 87–126 and 189–272; these read RAPP…SVHD and LQCR…NHPS. The segment covering 95 to 108 has biased composition (low complexity); that stretch reads PSGASSGTGSASAT. A phosphoserine mark is found at Ser96 and Ser113. Phosphothreonine is present on Thr117. 2 stretches are compositionally biased toward pro residues: residues 200–210 and 251–262; these read SQPPPQPPAVT and TPGPAPAGPTPA. Residues 242 to 270 form repeat 1; it reads RAPAQNPELTPGPAPAGPTPAPETNAPNH. The interval 242-636 is 4 X 29 AA approximate repeats; that stretch reads RAPAQNPELT…VASPTITVAM (395 aa). The residue at position 350 (Thr350) is a Phosphothreonine. Disordered regions lie at residues 385-441, 461-528, and 560-603; these read VTMT…TSHP, IQDS…TLQG, and PGMA…PSMA. Positions 393–407 are enriched in pro residues; it reads RPPPTPNAEAPPPGP. The span at 408–426 shows a compositional bias: low complexity; the sequence is GQASSVAPSSTNVESSAEG. Copy 2 of the repeat occupies 415 to 443; it reads PSSTNVESSAEGAPPPGPAPPPATSHPRV. Composition is skewed to pro residues over residues 427–438 and 507–520; these read APPPGPAPPPAT and PTPP…PGGP. The segment covering 569 to 586 has biased composition (low complexity); the sequence is ATASASAGTTNTATTAGP. 2 repeat units span residues 574 to 602 and 608 to 636. Residues 588–599 show a composition bias toward pro residues; the sequence is PGGPAQPPPTPQ. Positions 651 to 692 are disordered; the sequence is QATQTAPPPPPPPPPPPPAPEQQTMPPPGSPSGGAGSPGGLG. A compositionally biased stretch (pro residues) spans 656–680; it reads APPPPPPPPPPPPAPEQQTMPPPGS. Residues 681–692 show a composition bias toward gly residues; sequence PSGGAGSPGGLG. Phosphoserine is present on residues Val832, Ser964, and Ser973. The disordered stretch occupies residues 947–1132; sequence PQPLPEEPME…NAQRAFADDP (186 aa). Residues 1005-1020 show a composition bias toward low complexity; the sequence is AETEPWAAAVPPEWVP. Residues 1010 to 1040 form a required for interaction with GET4 region; it reads WAAAVPPEWVPIIQQDIQSQRKVKPQPPLSD. The Nuclear localization site signature appears at 1012–1054; that stretch reads AAVPPEWVPIIQQDIQSQRKVKPQPPLSDAYLSGMPAKRRKTM. The segment at 1022 to 1132 is sufficient for the delivery of client proteins to the endoplasmic reticulum; it reads IQQDIQSQRK…NAQRAFADDP (111 aa). Thr1053 is subject to Phosphothreonine. The segment at 1058-1115 is BAG-similar domain, required and sufficient for interaction with UBL4A; it reads GPQLLLSEAVSRAAKAAGARPLTSPESLSRDLEAPEVQESYRQQLRSDIQKRLQEDPN. The span at 1066 to 1076 shows a compositional bias: low complexity; it reads AVSRAAKAAGA. Ser1081 and Ser1117 each carry phosphoserine.

As to quaternary structure, component of the BAG6/BAT3 complex, also named BAT3 complex, at least composed of BAG6, UBL4A and GET4/TRC35. Interacts with GET4; the interaction is direct and localizes BAG6 in the cytosol. Interacts with UBL4A; the interaction is direct and required for UBL4A protein stability. Interacts with AIFM1. Interacts with HSPA2. Interacts with CTCFL. Interacts with p300/EP300. Interacts (via ubiquitin-like domain) with RNF126; required for BAG6-dependent ubiquitination of proteins mislocalized to the cytosol. Interacts (via ubiquitin-like domain) with SGTA; SGTA competes with RNF126 by binding the same region of BAG6, thereby promoting deubiquitination of BAG6-target proteins and rescuing them from degradation. Interacts with ricin A chain. Interacts with VCP and AMFR; both form the VCP/p97-AMFR/gp78 complex. Interacts with SYVN1. Interacts with USP13; the interaction is direct and may mediate UBL4A deubiquitination. Interacts with ZFAND2B. Interacts with KPNA2. Interacts with UBQLN4. In terms of assembly, (Microbial infection) Interacts with L.pneumophila Lpg2160 and LegU1 proteins. Post-translationally, ricin can induce a cleavage by the caspase CASP3. The released C-terminal peptide induces apoptosis. (Microbial infection) In case of infection by L.pneumophila, ubiquitinated by the SCF(LegU1) complex. As to expression, expressed by immature dendritic cells (at protein level).

The protein localises to the cytoplasm. The protein resides in the cytosol. It localises to the nucleus. Its subcellular location is the secreted. It is found in the extracellular exosome. ATP-independent molecular chaperone preventing the aggregation of misfolded and hydrophobic patches-containing proteins. Functions as part of a cytosolic protein quality control complex, the BAG6/BAT3 complex, which maintains these client proteins in a soluble state and participates in their proper delivery to the endoplasmic reticulum or alternatively can promote their sorting to the proteasome where they undergo degradation. The BAG6/BAT3 complex is involved in the post-translational delivery of tail-anchored/type II transmembrane proteins to the endoplasmic reticulum membrane. Recruited to ribosomes, it interacts with the transmembrane region of newly synthesized tail-anchored proteins and together with SGTA and ASNA1 mediates their delivery to the endoplasmic reticulum. Client proteins that cannot be properly delivered to the endoplasmic reticulum are ubiquitinated by RNF126, an E3 ubiquitin-protein ligase associated with BAG6 and are sorted to the proteasome. SGTA which prevents the recruitment of RNF126 to BAG6 may negatively regulate the ubiquitination and the proteasomal degradation of client proteins. Similarly, the BAG6/BAT3 complex also functions as a sorting platform for proteins of the secretory pathway that are mislocalized to the cytosol either delivering them to the proteasome for degradation or to the endoplasmic reticulum. The BAG6/BAT3 complex also plays a role in the endoplasmic reticulum-associated degradation (ERAD), a quality control mechanism that eliminates unwanted proteins of the endoplasmic reticulum through their retrotranslocation to the cytosol and their targeting to the proteasome. It maintains these retrotranslocated proteins in an unfolded yet soluble state condition in the cytosol to ensure their proper delivery to the proteasome. BAG6 is also required for selective ubiquitin-mediated degradation of defective nascent chain polypeptides by the proteasome. In this context, it may participate in the production of antigenic peptides and play a role in antigen presentation in immune response. BAG6 is also involved in endoplasmic reticulum stress-induced pre-emptive quality control, a mechanism that selectively attenuates the translocation of newly synthesized proteins into the endoplasmic reticulum and reroutes them to the cytosol for proteasomal degradation. BAG6 may ensure the proper degradation of these proteins and thereby protects the endoplasmic reticulum from protein overload upon stress. By inhibiting the polyubiquitination and subsequent proteasomal degradation of HSPA2 it may also play a role in the assembly of the synaptonemal complex during spermatogenesis. Also positively regulates apoptosis by interacting with and stabilizing the proapoptotic factor AIFM1. By controlling the steady-state expression of the IGF1R receptor, indirectly regulates the insulin-like growth factor receptor signaling pathway. Its function is as follows. Involved in DNA damage-induced apoptosis: following DNA damage, accumulates in the nucleus and forms a complex with p300/EP300, enhancing p300/EP300-mediated p53/TP53 acetylation leading to increase p53/TP53 transcriptional activity. When nuclear, may also act as a component of some chromatin regulator complex that regulates histone 3 'Lys-4' dimethylation (H3K4me2). In terms of biological role, released extracellularly via exosomes, it is a ligand of the natural killer/NK cells receptor NCR3 and stimulates NK cells cytotoxicity. It may thereby trigger NK cells cytotoxicity against neighboring tumor cells and immature myeloid dendritic cells (DC). Functionally, mediates ricin-induced apoptosis. This is Large proline-rich protein BAG6 from Homo sapiens (Human).